Reading from the N-terminus, the 193-residue chain is MSYRKQRETKETAIDIRMDLNDNQASSINTGVGFLDHMLTLFSFHSGINLQINVQGDTEVDDHHTTEDIGIVLGQLLLEAIKDKQSFTRYGAFYIPMDETLARVVTDISGRPYLSFNAEFSKEKVGTFDTELVEEFFRGLVINARLTTHIDLIRGGNTHHEIEAIFKAFARSLKIALSDDGSKGVPSSKGVIE.

This sequence belongs to the imidazoleglycerol-phosphate dehydratase family.

Its subcellular location is the cytoplasm. It carries out the reaction D-erythro-1-(imidazol-4-yl)glycerol 3-phosphate = 3-(imidazol-4-yl)-2-oxopropyl phosphate + H2O. The protein operates within amino-acid biosynthesis; L-histidine biosynthesis; L-histidine from 5-phospho-alpha-D-ribose 1-diphosphate: step 6/9. The sequence is that of Imidazoleglycerol-phosphate dehydratase from Staphylococcus carnosus (strain TM300).